We begin with the raw amino-acid sequence, 750 residues long: Coiled-coil domain-containing protein 142 (750 aa).

The interval 1–29 is disordered; the sequence is MAQASRSGSLPPLVIVPPLRAQPGGTGEE. A coiled-coil region spans residues 87–110; that stretch reads ALQRLRAVLLRLHREREQLLQARD. A disordered region spans residues 687–714; sequence LEPPLQPGTSPAQTGQLQSTLGGRGPSP. The segment covering 693–707 has biased composition (polar residues); sequence PGTSPAQTGQLQSTL.

The sequence is that of Coiled-coil domain-containing protein 142 (CCDC142) from Homo sapiens (Human).